A 101-amino-acid chain; its full sequence is Putative pterin-4-alpha-carbinolamine dehydratase (101 aa).

Belongs to the pterin-4-alpha-carbinolamine dehydratase family.

The enzyme catalyses (4aS,6R)-4a-hydroxy-L-erythro-5,6,7,8-tetrahydrobiopterin = (6R)-L-erythro-6,7-dihydrobiopterin + H2O. This Rhodopseudomonas palustris (strain BisB18) protein is Putative pterin-4-alpha-carbinolamine dehydratase.